Reading from the N-terminus, the 156-residue chain is Transcription antitermination protein NusB (156 aa).

Belongs to the NusB family.

In terms of biological role, involved in transcription antitermination. Required for transcription of ribosomal RNA (rRNA) genes. Binds specifically to the boxA antiterminator sequence of the ribosomal RNA (rrn) operons. The sequence is that of Transcription antitermination protein NusB from Rickettsia bellii (strain OSU 85-389).